Here is a 306-residue protein sequence, read N- to C-terminus: Agmatinase (306 aa).

Mn(2+) contacts are provided by His126, Asp149, His151, Asp153, Asp230, and Asp232.

This sequence belongs to the arginase family. Agmatinase subfamily. Requires Mn(2+) as cofactor.

It catalyses the reaction agmatine + H2O = urea + putrescine. Its pathway is amine and polyamine biosynthesis; putrescine biosynthesis via agmatine pathway; putrescine from agmatine: step 1/1. In terms of biological role, catalyzes the formation of putrescine from agmatine. The sequence is that of Agmatinase from Shigella sonnei (strain Ss046).